Reading from the N-terminus, the 245-residue chain is TLC domain-containing protein 5 (245 aa).

6 helical membrane-spanning segments follow: residues 1-21, 38-58, 75-95, 99-119, 162-182, and 191-211; these read MALA…SLYI, LVTF…GFID, VHVL…CVYF, GALM…ALVL, FLFV…LLFC, and WFVK…MFSI. The TLC domain occupies 29–204; the sequence is HRSYEWSCRL…AGGVAMYAVS (176 aa).

Belongs to the TLCD5 family.

The protein resides in the membrane. The protein is TLC domain-containing protein 5 of Homo sapiens (Human).